The primary structure comprises 220 residues: Pro-Pro endopeptidase (220 aa).

The first 26 residues, 1–26, serve as a signal peptide directing secretion; sequence MRPSKKLLIAIISIFLISSVPVSAHA. The ATLF-like domain occupies 35–220; the sequence is KDTLSQIVVF…TYSFLQNLAK (186 aa). Interacts with substrate peptide stretches follow at residues 101–103 and 117–119; these read KGW and GGS. His-142 lines the Zn(2+) pocket. Catalysis depends on Glu-143, which acts as the Proton acceptor. The Zn(2+) site is built by His-146, Tyr-178, and Glu-185.

It belongs to the peptidase M34 family. Pro-Pro endopeptidase subfamily. Monomer. Zn(2+) serves as cofactor.

Its subcellular location is the secreted. It carries out the reaction The enzyme catalyzes the hydrolytic cleavage of peptide bonds between two proline residues.. Its activity is regulated as follows. Is inhibited by the chelating agent o-phenanthroline in vitro. In terms of biological role, zinc-dependent endoprotease with a unique preference for proline residues surrounding the scissile bond. Exhibits a high preference for an asparagine at the P2 position and hydrophobic residues (Val, Ile, Leu) at the P3 position. Efficiently cleaves the LPXTG cell surface proteins CD630_28310 and CD630_32460 at multiple cleavage sites in vivo. Has a role in the regulation of C.difficile adhesion versus motility by cleaving surface adhesion proteins such as the collagen binding protein CD630_28310, and is important for efficient infection. Is also able to cleave fibronectin and fibrinogen in vitro; cleaves at the N-terminus of the beta-chain of fibrinogen. Destabilizes the fibronectin network produced by human fibroblasts. Therefore, may be important in key steps of clostridial pathogenesis by degrading extracellular matrix components associated with the gut epithelial cells. To a lesser extent, IgA1, IgA2, and human HSP 90-beta, but not HSP 90-alpha, are also substrates for the enzyme. Is not active on different collagen types, casein and gelatin. The protein is Pro-Pro endopeptidase of Clostridioides difficile (strain 630) (Peptoclostridium difficile).